The primary structure comprises 653 residues: NADH-ubiquinone oxidoreductase chain 5 (653 aa).

The next 16 membrane-spanning stretches (helical) occupy residues 1–21 (MYLVIIFLPLLGSIISGFFGR), 30–50 (LITSSFIIITTMLAIFNFFEV), 81–103 (LTVSMLIPVLIVSSLVHIYSIGY), 120–140 (FTFMMIILVTANNYLLMFLGV), 177–197 (FLTIGMFIIIWSFGNLDYSTV), 200–220 (LAPYFNQEFITLIGICLLIGA), 241–261 (TPVSALIHAATMVTAGVYLLM), 274–294 (LILCLWLGAITTIFSSIIGLF), 301–319 (VIAYSTMSQLGMMVIAIGL), 331–351 (NHAFYKALLFLGAGAVIHSVS), 365–385 (FLPLAYSIMLIASLSLVAIPF), 403–423 (FYISSTLVYFIATIGAMFTTL), 452–472 (IFINLPLIILAIFSIFFGYLT), 511–531 (LLPLFFTITLSIIGIMFSEFF), 610–630 (GVITSYALYILIGLIFYVFLL), and 631–651 (YLNIDNNILLLLLFGIFSTIN).

The protein belongs to the complex I subunit 5 family.

The protein resides in the mitochondrion inner membrane. The catalysed reaction is a ubiquinone + NADH + 5 H(+)(in) = a ubiquinol + NAD(+) + 4 H(+)(out). Core subunit of the mitochondrial membrane respiratory chain NADH dehydrogenase (Complex I) that is believed to belong to the minimal assembly required for catalysis. Complex I functions in the transfer of electrons from NADH to the respiratory chain. The immediate electron acceptor for the enzyme is believed to be ubiquinone. This chain is NADH-ubiquinone oxidoreductase chain 5 (ND5), found in Trichophyton rubrum (Athlete's foot fungus).